Reading from the N-terminus, the 418-residue chain is Alditol oxidase (418 aa).

An FAD-binding PCMH-type domain is found at 13–179 (ITYTAKELLR…TSLTLDLEPA (167 aa)). FAD is bound by residues 41-47 (VLGSGHS), S106, S111, G114, 118-121 (TGTH), and V169. H46 is modified (pros-8alpha-FAD histidine). S106 is a D-sorbitol binding site. Position 106 (S106) interacts with xylitol. D-sorbitol is bound by residues E320, R322, and T345. 3 residues coordinate xylitol: E320, R322, and T345. FAD is bound at residue R322. An FAD-binding site is contributed by H372. Residue K375 coordinates D-sorbitol. Xylitol is bound at residue K375.

The protein belongs to the oxygen-dependent FAD-linked oxidoreductase family. Monomer. The cofactor is FAD.

The enzyme catalyses an alditol + O2 = an aldose + H2O2. The catalysed reaction is xylitol + O2 = D-xylose + H2O2. It carries out the reaction D-sorbitol + O2 = D-glucose + H2O2. Functionally, oxidase that performs selective oxidation of the terminal primary hydroxyl group of several alditols, with a reduction of O2 to H2O2. Shows highest activity on xylitol and D-sorbitol, and a poor efficiency with D-mannitol and L-threitol. This chain is Alditol oxidase (xyoA), found in Streptomyces coelicolor (strain ATCC BAA-471 / A3(2) / M145).